We begin with the raw amino-acid sequence, 487 residues long: Betaine aldehyde dehydrogenase (487 aa).

Residues Ser-26 and Asp-93 each contribute to the K(+) site. Position 150 to 152 (150 to 152) interacts with NAD(+); that stretch reads GAW. The active-site Charge relay system is Lys-162. NAD(+)-binding positions include 176–179 and 229–232; these read KPSE and SVPT. Leu-244 contributes to the K(+) binding site. Glu-250 serves as the catalytic Proton acceptor. 3 residues coordinate NAD(+): Gly-252, Cys-284, and Glu-384. Cys-284 serves as the catalytic Nucleophile. A Cysteine sulfenic acid (-SOH) modification is found at Cys-284. K(+) contacts are provided by Lys-454 and Gly-457. Glu-461 serves as the catalytic Charge relay system.

This sequence belongs to the aldehyde dehydrogenase family. In terms of assembly, dimer of dimers. It depends on K(+) as a cofactor.

It catalyses the reaction betaine aldehyde + NAD(+) + H2O = glycine betaine + NADH + 2 H(+). It functions in the pathway amine and polyamine biosynthesis; betaine biosynthesis via choline pathway; betaine from betaine aldehyde: step 1/1. Involved in the biosynthesis of the osmoprotectant glycine betaine. Catalyzes the irreversible oxidation of betaine aldehyde to the corresponding acid. The protein is Betaine aldehyde dehydrogenase of Rhizobium etli (strain CIAT 652).